Reading from the N-terminus, the 418-residue chain is Putative competence-damage inducible protein (418 aa).

It belongs to the CinA family.

In Streptococcus pneumoniae serotype 2 (strain D39 / NCTC 7466), this protein is Putative competence-damage inducible protein.